A 182-amino-acid chain; its full sequence is ATP-dependent protease subunit HslV (182 aa).

Threonine 7 is an active-site residue. Na(+) is bound by residues glycine 162, cysteine 165, and threonine 168.

This sequence belongs to the peptidase T1B family. HslV subfamily. In terms of assembly, a double ring-shaped homohexamer of HslV is capped on each side by a ring-shaped HslU homohexamer. The assembly of the HslU/HslV complex is dependent on binding of ATP.

It is found in the cytoplasm. The catalysed reaction is ATP-dependent cleavage of peptide bonds with broad specificity.. Allosterically activated by HslU binding. Protease subunit of a proteasome-like degradation complex believed to be a general protein degrading machinery. This is ATP-dependent protease subunit HslV from Legionella pneumophila (strain Lens).